Consider the following 316-residue polypeptide: MASTSRIDALPKVTCPNHPDALLVEDYRAGDMICSECGLVVGDRVIDVGSEWRTFSNDKAAADPSRVGDAQNPLLSGGDLTTMIGKGTGSASFDEFGNSKYQNRRTMSSSDRAMMNAFKEITNMSDRINLPRNIIDRTNNLFKQVYEQKSLKGRSNDAIASACLYIACRQEGVPRTFKEICAVSRISKKEIGRCFKLILKALETNVDLITTGDFMSRFCSNLGLTKQVQMAATHIARKAVELDLVPGRSPISVAAAAIYMASQASAEKRTQKEIGDIAGVADVTIRQSYRLIYPRAPDLFPADFKFDTPVDKLPQL.

The TFIIB-type zinc-finger motif lies at 11 to 42; it reads PKVTCPNHPDALLVEDYRAGDMICSECGLVVG. Positions 15, 18, 34, and 37 each coordinate Zn(2+). 2 tandem repeats follow at residues 124-200 and 218-294.

The protein belongs to the TFIIB family.

It localises to the nucleus. The protein resides in the chromosome. The enzyme catalyses L-lysyl-[protein] + acetyl-CoA = N(6)-acetyl-L-lysyl-[protein] + CoA + H(+). Functionally, general transcription factor that plays a role in transcription initiation by RNA polymerase II (Pol II). Involved in the pre-initiation complex (PIC) formation and Pol II recruitment at promoter DNA. Together with the TATA box-bound TBP forms the core initiation complex and provides a bridge between TBP and the Pol II-TFIIF complex. Released from the PIC early following the onset of transcription during the initiation and elongation transition and reassociates with TBP during the next transcription cycle. Associates with chromatin to core promoter-specific regions. Binds to two distinct DNA core promoter consensus sequence elements in a TBP-independent manner; these IIB-recognition elements (BREs) are localized immediately upstream (BREu), 5'-[GC][GC][GA]CGCC-3', and downstream (BREd), 5'-[GA]T[TGA][TG][GT][TG][TG]-3', of the TATA box element. Modulates transcription start site selection. Also exhibits autoacetyltransferase activity that contributes to the activated transcription. In Xenopus laevis (African clawed frog), this protein is Transcription initiation factor IIB.